Reading from the N-terminus, the 471-residue chain is Eukaryotic translation initiation factor 3 subunit M (471 aa).

The tract at residues 39–61 (EISSLLEPLRQQEQSEEEPDRKQ) is disordered. Positions 206–377 (DFELAQSHVV…SEFLVHRATY (172 aa)) constitute a PCI domain. The segment at 419–471 (QAATEEANQGKSGEKGGKGGDRRRNPQHQQQQQQSQPSQPQQPRETELVAGAE) is disordered. Residues 430 to 442 (SGEKGGKGGDRRR) show a composition bias toward basic and acidic residues. The span at 445-461 (QHQQQQQQSQPSQPQQP) shows a compositional bias: low complexity.

The protein belongs to the eIF-3 subunit M family. In terms of assembly, component of the eukaryotic translation initiation factor 3 (eIF-3) complex.

It is found in the cytoplasm. Functionally, component of the eukaryotic translation initiation factor 3 (eIF-3) complex, which is involved in protein synthesis of a specialized repertoire of mRNAs and, together with other initiation factors, stimulates binding of mRNA and methionyl-tRNAi to the 40S ribosome. The eIF-3 complex specifically targets and initiates translation of a subset of mRNAs involved in cell proliferation. This chain is Eukaryotic translation initiation factor 3 subunit M, found in Aspergillus clavatus (strain ATCC 1007 / CBS 513.65 / DSM 816 / NCTC 3887 / NRRL 1 / QM 1276 / 107).